The chain runs to 731 residues: Anaphase-promoting complex subunit 2 (731 aa).

The protein belongs to the cullin family. The APC/C is probably composed of at least 12 subunits: apc-2, apc-10, apc-11, cdc-26, emb-1, emb-27, emb-30, mat-1, mat-2, mat-3, such-1 and gfi-3.

It functions in the pathway protein modification; protein ubiquitination. In terms of biological role, probable component of the anaphase promoting complex/cyclosome (APC/C), a cell cycle-regulated ubiquitin ligase that controls progression through mitosis and the G1 phase of the cell cycle. The APC/C complex acts by mediating ubiquitination and subsequent degradation of target proteins. Developmental role in early embryogenesis and the metaphase to anaphase transition in meiosis and mitosis. This is Anaphase-promoting complex subunit 2 from Caenorhabditis elegans.